The following is a 929-amino-acid chain: Probable LRR receptor-like serine/threonine-protein kinase At1g67720 (929 aa).

Residues 1 to 21 form the signal peptide; sequence MGLCLAQLAVTCLFLVPFVLS. The Extracellular segment spans residues 22–531; that stretch reads QVTEFVSIDC…NEAQRKHFWQ (510 aa). 7 N-linked (GlcNAc...) asparagine glycosylation sites follow: Asn-36, Asn-173, Asn-236, Asn-293, Asn-320, Asn-332, and Asn-407. LRR repeat units follow at residues 413–437, 438–460, 461–484, and 485–508; these read PPRV…INYM, EALT…MSKL, VNLK…LAHL, and PNLQ…LLKG. N-linked (GlcNAc...) asparagine glycosylation is present at Asn-494. A helical membrane pass occupies residues 532–552; that stretch reads ILGISIAAVAILLLLVGGSLV. Residues 553–929 lie on the Cytoplasmic side of the membrane; sequence LLCALRKTKR…SRNSLAPAAR (377 aa). The region spanning 606–880 is the Protein kinase domain; it reads DNFSKKVGRG…EVIVAIQDAI (275 aa). ATP contacts are provided by residues 612–620 and Lys-634; that span reads VGRGSFGSV. At Tyr-679 the chain carries Phosphotyrosine. Asp-731 serves as the catalytic Proton acceptor. Residues Ser-735 and Ser-764 each carry the phosphoserine modification. Thr-770 is modified (phosphothreonine). Tyr-778 carries the post-translational modification Phosphotyrosine.

It belongs to the protein kinase superfamily. Ser/Thr protein kinase family.

The protein localises to the membrane. It carries out the reaction L-seryl-[protein] + ATP = O-phospho-L-seryl-[protein] + ADP + H(+). The enzyme catalyses L-threonyl-[protein] + ATP = O-phospho-L-threonyl-[protein] + ADP + H(+). In Arabidopsis thaliana (Mouse-ear cress), this protein is Probable LRR receptor-like serine/threonine-protein kinase At1g67720.